We begin with the raw amino-acid sequence, 101 residues long: Large ribosomal subunit protein bL27 (101 aa).

Residues Met1 to Phe9 constitute a propeptide that is removed on maturation.

It belongs to the bacterial ribosomal protein bL27 family. The N-terminus is cleaved by ribosomal processing cysteine protease Prp.

The sequence is that of Large ribosomal subunit protein bL27 from Clostridium tetani (strain Massachusetts / E88).